A 98-amino-acid polypeptide reads, in one-letter code: NADH-ubiquinone oxidoreductase chain 4L (98 aa).

Transmembrane regions (helical) follow at residues 1–21, 29–49, and 61–81; these read MSMV…GLLM, SLLC…VTIL, and IILL…LVMV.

The protein belongs to the complex I subunit 4L family. As to quaternary structure, core subunit of respiratory chain NADH dehydrogenase (Complex I) which is composed of 45 different subunits.

The protein resides in the mitochondrion inner membrane. It catalyses the reaction a ubiquinone + NADH + 5 H(+)(in) = a ubiquinol + NAD(+) + 4 H(+)(out). In terms of biological role, core subunit of the mitochondrial membrane respiratory chain NADH dehydrogenase (Complex I) which catalyzes electron transfer from NADH through the respiratory chain, using ubiquinone as an electron acceptor. Part of the enzyme membrane arm which is embedded in the lipid bilayer and involved in proton translocation. The protein is NADH-ubiquinone oxidoreductase chain 4L (MT-ND4L) of Phoca fasciata (Ribbon seal).